Consider the following 149-residue polypeptide: 1,4-dihydroxy-2-naphthoyl-CoA hydrolase (149 aa).

The active site involves D19.

The protein belongs to the 4-hydroxybenzoyl-CoA thioesterase family. DHNA-CoA hydrolase subfamily.

The enzyme catalyses 1,4-dihydroxy-2-naphthoyl-CoA + H2O = 1,4-dihydroxy-2-naphthoate + CoA + H(+). It participates in cofactor biosynthesis; phylloquinone biosynthesis. Its pathway is quinol/quinone metabolism; 1,4-dihydroxy-2-naphthoate biosynthesis; 1,4-dihydroxy-2-naphthoate from chorismate: step 7/7. Catalyzes the hydrolysis of 1,4-dihydroxy-2-naphthoyl-CoA (DHNA-CoA) to 1,4-dihydroxy-2-naphthoate (DHNA), a reaction involved in phylloquinone (vitamin K1) biosynthesis. In Synechococcus sp. (strain CC9605), this protein is 1,4-dihydroxy-2-naphthoyl-CoA hydrolase.